A 375-amino-acid chain; its full sequence is Succinyl-diaminopimelate desuccinylase (375 aa).

His-66 is a Zn(2+) binding site. Residue Asp-68 is part of the active site. Residue Asp-99 coordinates Zn(2+). The Proton acceptor role is filled by Glu-133. 3 residues coordinate Zn(2+): Glu-134, Glu-162, and His-348.

This sequence belongs to the peptidase M20A family. DapE subfamily. As to quaternary structure, homodimer. Zn(2+) serves as cofactor. Co(2+) is required as a cofactor.

The enzyme catalyses N-succinyl-(2S,6S)-2,6-diaminopimelate + H2O = (2S,6S)-2,6-diaminopimelate + succinate. It participates in amino-acid biosynthesis; L-lysine biosynthesis via DAP pathway; LL-2,6-diaminopimelate from (S)-tetrahydrodipicolinate (succinylase route): step 3/3. In terms of biological role, catalyzes the hydrolysis of N-succinyl-L,L-diaminopimelic acid (SDAP), forming succinate and LL-2,6-diaminopimelate (DAP), an intermediate involved in the bacterial biosynthesis of lysine and meso-diaminopimelic acid, an essential component of bacterial cell walls. This chain is Succinyl-diaminopimelate desuccinylase, found in Salmonella choleraesuis (strain SC-B67).